The following is a 630-amino-acid chain: tRNA uridine 5-carboxymethylaminomethyl modification enzyme MnmG (630 aa).

Residue 15–20 (GAGHAG) coordinates FAD. 274 to 288 (GPRYCPSIEDKIVRF) contacts NAD(+).

Belongs to the MnmG family. In terms of assembly, homodimer. Heterotetramer of two MnmE and two MnmG subunits. FAD is required as a cofactor.

The protein resides in the cytoplasm. Its function is as follows. NAD-binding protein involved in the addition of a carboxymethylaminomethyl (cmnm) group at the wobble position (U34) of certain tRNAs, forming tRNA-cmnm(5)s(2)U34. The sequence is that of tRNA uridine 5-carboxymethylaminomethyl modification enzyme MnmG from Alkaliphilus oremlandii (strain OhILAs) (Clostridium oremlandii (strain OhILAs)).